Consider the following 254-residue polypeptide: Adenosine 5'-phosphosulfate reductase (254 aa).

[4Fe-4S] cluster is bound by residues cysteine 140, cysteine 141, cysteine 223, and cysteine 226. Residue cysteine 249 is the Nucleophile; cysteine thiosulfonate intermediate of the active site.

Belongs to the PAPS reductase family. CysH subfamily. Requires [4Fe-4S] cluster as cofactor.

The protein resides in the cytoplasm. The catalysed reaction is [thioredoxin]-disulfide + sulfite + AMP + 2 H(+) = adenosine 5'-phosphosulfate + [thioredoxin]-dithiol. Its pathway is sulfur metabolism; hydrogen sulfide biosynthesis; sulfite from sulfate. In terms of biological role, catalyzes the formation of sulfite from adenosine 5'-phosphosulfate (APS) using thioredoxin as an electron donor. This chain is Adenosine 5'-phosphosulfate reductase, found in Mycobacterium bovis (strain ATCC BAA-935 / AF2122/97).